Reading from the N-terminus, the 254-residue chain is Acetylglutamate kinase (254 aa).

Substrate contacts are provided by residues 40–41, arginine 62, and asparagine 158; that span reads GG.

This sequence belongs to the acetylglutamate kinase family. ArgB subfamily.

It is found in the cytoplasm. The enzyme catalyses N-acetyl-L-glutamate + ATP = N-acetyl-L-glutamyl 5-phosphate + ADP. Its pathway is amino-acid biosynthesis; L-arginine biosynthesis; N(2)-acetyl-L-ornithine from L-glutamate: step 2/4. Functionally, catalyzes the ATP-dependent phosphorylation of N-acetyl-L-glutamate. This is Acetylglutamate kinase from Chloroflexus aurantiacus (strain ATCC 29366 / DSM 635 / J-10-fl).